We begin with the raw amino-acid sequence, 267 residues long: MIKLSIIYNEDKEDAIKIYKELLKYLKSKKEFEVLDDKNISQAEYIVVIGGDGTLLRGFKKIKDKKVKIIAINSGTLGYLTEIRKDGYKKIFENILKGKINIEERYFFTVKIGKKKYNALNEVFLTKDNIKRNIVSSEIYVDDKFLGKFKGDGVIIATPTGSTAYSLSAGGPIVTPELKLFLITPIAPHNLNTRPIILSGDVKIVLTLVGPSEFGIVNVDGHTHNKINIEDKVEISYSKESLKIVLPDDRNYYNVLREKLKWGENLC.

Catalysis depends on Asp-52, which acts as the Proton acceptor. Residues 52-53, Arg-57, 121-122, Arg-132, Lys-150, Asp-152, 163-168, and Ala-187 contribute to the NAD(+) site; these read DG, NE, and TAYSLS.

Belongs to the NAD kinase family. The cofactor is a divalent metal cation.

The protein resides in the cytoplasm. The enzyme catalyses NAD(+) + ATP = ADP + NADP(+) + H(+). In terms of biological role, involved in the regulation of the intracellular balance of NAD and NADP, and is a key enzyme in the biosynthesis of NADP. Catalyzes specifically the phosphorylation on 2'-hydroxyl of the adenosine moiety of NAD to yield NADP. The sequence is that of NAD kinase from Fusobacterium nucleatum subsp. nucleatum (strain ATCC 25586 / DSM 15643 / BCRC 10681 / CIP 101130 / JCM 8532 / KCTC 2640 / LMG 13131 / VPI 4355).